A 157-amino-acid chain; its full sequence is 6,7-dimethyl-8-ribityllumazine synthase 1 (157 aa).

Residues F22, 53-55 (ALE), and 82-84 (TVI) contribute to the 5-amino-6-(D-ribitylamino)uracil site. 87 to 88 (ET) is a (2S)-2-hydroxy-3-oxobutyl phosphate binding site. Residue H90 is the Proton donor of the active site. N115 contributes to the 5-amino-6-(D-ribitylamino)uracil binding site. (2S)-2-hydroxy-3-oxobutyl phosphate is bound at residue R129.

Belongs to the DMRL synthase family.

The enzyme catalyses (2S)-2-hydroxy-3-oxobutyl phosphate + 5-amino-6-(D-ribitylamino)uracil = 6,7-dimethyl-8-(1-D-ribityl)lumazine + phosphate + 2 H2O + H(+). Its pathway is cofactor biosynthesis; riboflavin biosynthesis; riboflavin from 2-hydroxy-3-oxobutyl phosphate and 5-amino-6-(D-ribitylamino)uracil: step 1/2. Its function is as follows. Catalyzes the formation of 6,7-dimethyl-8-ribityllumazine by condensation of 5-amino-6-(D-ribitylamino)uracil with 3,4-dihydroxy-2-butanone 4-phosphate. This is the penultimate step in the biosynthesis of riboflavin. This Brucella suis biovar 1 (strain 1330) protein is 6,7-dimethyl-8-ribityllumazine synthase 1.